The primary structure comprises 441 residues: Histidine--tRNA ligase (441 aa).

It belongs to the class-II aminoacyl-tRNA synthetase family. Homodimer.

The protein localises to the cytoplasm. It catalyses the reaction tRNA(His) + L-histidine + ATP = L-histidyl-tRNA(His) + AMP + diphosphate + H(+). The protein is Histidine--tRNA ligase of Koribacter versatilis (strain Ellin345).